Here is a 305-residue protein sequence, read N- to C-terminus: Methionyl-tRNA formyltransferase (305 aa).

110-113 (SLLP) lines the (6S)-5,6,7,8-tetrahydrofolate pocket.

The protein belongs to the Fmt family.

The catalysed reaction is L-methionyl-tRNA(fMet) + (6R)-10-formyltetrahydrofolate = N-formyl-L-methionyl-tRNA(fMet) + (6S)-5,6,7,8-tetrahydrofolate + H(+). Functionally, attaches a formyl group to the free amino group of methionyl-tRNA(fMet). The formyl group appears to play a dual role in the initiator identity of N-formylmethionyl-tRNA by promoting its recognition by IF2 and preventing the misappropriation of this tRNA by the elongation apparatus. This Ureaplasma parvum serovar 3 (strain ATCC 700970) protein is Methionyl-tRNA formyltransferase.